The following is a 621-amino-acid chain: Glutathione-regulated potassium-efflux system protein KefC (621 aa).

The next 13 helical transmembrane spans lie at 4–24 (HTLIQALIYLGAAALIVPIAV), 26–46 (LGLGSVLGYLIAGCIIGPWAL), 54–74 (AILHFAEIGVVLMLFVIGLEL), 90–110 (GALQMVACGVLIGLFCMLLGL), 114–134 (VAELIGMTLALSSTAIAMQAM), 149–169 (FAVLLFQDIAAIPLVAMIPLL), 178–198 (LMAFALSALKVAAALALVVVL), 218–237 (VFSAVALFLVFGFGLLLEEV), 238–257 (GLSMAMGAFLAGVLLASSEY), 270–290 (GLLLGLFFIGVGMSIDFGTLV), 294–314 (LRIVILLVGFLAIKMLMLWLI), 326–346 (RWFAVLLGQGSEFAFVVFGAA), and 359–379 (ALTLAVALSMAATPILLVLLT). Positions 399-518 (QPRVIVAGFG…AGVEAPERET (120 aa)) constitute an RCK N-terminal domain. Positions 598–621 (GWQGTEEGRHTGDIADEPENKPSA) are disordered.

This sequence belongs to the monovalent cation:proton antiporter 2 (CPA2) transporter (TC 2.A.37) family. KefC subfamily. As to quaternary structure, homodimer. Interacts with the regulatory subunit KefF.

The protein localises to the cell inner membrane. In terms of biological role, pore-forming subunit of a potassium efflux system that confers protection against electrophiles. Catalyzes K(+)/H(+) antiport. This is Glutathione-regulated potassium-efflux system protein KefC from Klebsiella pneumoniae subsp. pneumoniae (strain ATCC 700721 / MGH 78578).